The primary structure comprises 435 residues: MSGFLEELLGDKLVTGGGEEVDVHSLGARGIALLGLYFGCSLSAPCAQLSASLAAFYGRLRGDAAAGPGAGAGAGAAAEPEPRHRLEIVFVSSDQDQRQWQDFVRDMPWLALPYKEKHRKLKLWNKYRVSNIPSLIFLDATTGKVVCRNGLLVIRDDPEGLEFPWGPKPFREVIAGPLLRNNGQSLESSSLEGSHVGVYFSAHWCPPCRSLTRVLVESYRKIKEAGQEFEIIFVSADRSEESFKQYFSEMPWLAVPYTDEARRSRLNRLYGIQGIPTLIVLDPQGEVITRQGRVEVLNDEDCREFPWHPKPVLELSDSNAVQLNEGPCLVLFVDSEDDGESEAAKQLIQPIAEKIIAKYKAKEEEAPLLFFVAGEDDMTDSLRDYTNLPEAAPLLTILDMSARAKYVMDVEEITPAIVETFVNDFLAEKLKPEPI.

Ser-2 is modified (N-acetylserine). The region spanning 167 to 314 (PKPFREVIAG…FPWHPKPVLE (148 aa)) is the Thioredoxin domain.

The protein belongs to the nucleoredoxin family. As to quaternary structure, associates with the phosphatase 2A holoenzyme. Interacts with PPP2CA; the interaction is direct. Interacts with DVL1 (via PDZ domain); the interaction is direct and regulated by oxidative stress. In terms of tissue distribution, widely expressed with higher expression in testis and skin.

Its subcellular location is the cytoplasm. It is found in the cytosol. It localises to the nucleus. It catalyses the reaction [protein]-dithiol + NAD(+) = [protein]-disulfide + NADH + H(+). The catalysed reaction is [protein]-dithiol + NADP(+) = [protein]-disulfide + NADPH + H(+). In terms of biological role, functions as a redox-dependent negative regulator of the Wnt signaling pathway, possibly by preventing ubiquitination of DVL3 by the BCR(KLHL12) complex. May also function as a transcriptional regulator act as a regulator of protein phosphatase 2A (PP2A). The sequence is that of Nucleoredoxin (Nxn) from Mus musculus (Mouse).